The primary structure comprises 475 residues: MKWETVIGLEVHTQLATQSKIFSASSTAFGAAPNTQASAVDIALPGVLPVLNKAAVECAIKFGLAIGATLNRVNVFDRKNYFYPDLPKGYQISQLAKPIVEGGALTIVVDGVEKTIHLTRAHMEEDAGKSLHEDFHGMTGIDLNRAGTPLLEIVSEPEMRSSAEAVAYARALHTLVTWIGICDGNMQEGSFRVDANVSVRPLGQAEFGTRREIKNLNSFRFLQQAIDYEVRWQIETLEDGGRIQQATVLFDPDTGETRMMRSKEEAHDYRYFPDPDLLPVKLDEAWIDAVRTTLPELPAAMRTRFQQDYGVSAYDASVLTGSRALAAYFEAAAQQSGQPKLAANWVMGELSAALNKAELDIGESPVSAVQLGTLITRIQDGTLSGKLAKQVFEGLWEGAGDVDGIIAARGLKQMSDAGELEKIVDEVLAANQKSVEEFRAGKDKAFNALVGQVMKASRGKANPAQVNELLKAKLQ.

The protein belongs to the GatB/GatE family. GatB subfamily. In terms of assembly, heterotrimer of A, B and C subunits.

It carries out the reaction L-glutamyl-tRNA(Gln) + L-glutamine + ATP + H2O = L-glutaminyl-tRNA(Gln) + L-glutamate + ADP + phosphate + H(+). The enzyme catalyses L-aspartyl-tRNA(Asn) + L-glutamine + ATP + H2O = L-asparaginyl-tRNA(Asn) + L-glutamate + ADP + phosphate + 2 H(+). In terms of biological role, allows the formation of correctly charged Asn-tRNA(Asn) or Gln-tRNA(Gln) through the transamidation of misacylated Asp-tRNA(Asn) or Glu-tRNA(Gln) in organisms which lack either or both of asparaginyl-tRNA or glutaminyl-tRNA synthetases. The reaction takes place in the presence of glutamine and ATP through an activated phospho-Asp-tRNA(Asn) or phospho-Glu-tRNA(Gln). The protein is Aspartyl/glutamyl-tRNA(Asn/Gln) amidotransferase subunit B of Thiobacillus denitrificans (strain ATCC 25259 / T1).